The primary structure comprises 609 residues: Dihydroxy-acid dehydratase 1 (609 aa).

Mg(2+) is bound at residue aspartate 81. Cysteine 122 contributes to the [2Fe-2S] cluster binding site. Positions 123 and 124 each coordinate Mg(2+). Residue lysine 124 is modified to N6-carboxylysine. Cysteine 195 contacts [2Fe-2S] cluster. Glutamate 491 lines the Mg(2+) pocket. Catalysis depends on serine 517, which acts as the Proton acceptor.

The protein belongs to the IlvD/Edd family. As to quaternary structure, homodimer. [2Fe-2S] cluster is required as a cofactor. Requires Mg(2+) as cofactor.

It catalyses the reaction (2R)-2,3-dihydroxy-3-methylbutanoate = 3-methyl-2-oxobutanoate + H2O. It carries out the reaction (2R,3R)-2,3-dihydroxy-3-methylpentanoate = (S)-3-methyl-2-oxopentanoate + H2O. It participates in amino-acid biosynthesis; L-isoleucine biosynthesis; L-isoleucine from 2-oxobutanoate: step 3/4. The protein operates within amino-acid biosynthesis; L-valine biosynthesis; L-valine from pyruvate: step 3/4. Its function is as follows. Functions in the biosynthesis of branched-chain amino acids. Catalyzes the dehydration of (2R,3R)-2,3-dihydroxy-3-methylpentanoate (2,3-dihydroxy-3-methylvalerate) into 2-oxo-3-methylpentanoate (2-oxo-3-methylvalerate) and of (2R)-2,3-dihydroxy-3-methylbutanoate (2,3-dihydroxyisovalerate) into 2-oxo-3-methylbutanoate (2-oxoisovalerate), the penultimate precursor to L-isoleucine and L-valine, respectively. The protein is Dihydroxy-acid dehydratase 1 of Acinetobacter baylyi (strain ATCC 33305 / BD413 / ADP1).